We begin with the raw amino-acid sequence, 355 residues long: Diacylglycerol O-acyltransferase 2A (355 aa).

2 consecutive transmembrane segments (helical) span residues Leu41 to Pro61 and Val62 to Trp78. Asn142 is a glycosylation site (N-linked (GlcNAc...) asparagine).

The protein belongs to the diacylglycerol acyltransferase family.

The protein localises to the endoplasmic reticulum membrane. The catalysed reaction is an acyl-CoA + a 1,2-diacyl-sn-glycerol = a triacyl-sn-glycerol + CoA. It participates in glycerolipid metabolism; triacylglycerol biosynthesis. Functionally, catalyzes the terminal and only committed step in triacylglycerol synthesis by using diacylglycerol and fatty acyl CoA as substrates. Required for storage lipid synthesis. The sequence is that of Diacylglycerol O-acyltransferase 2A (DGAT2A) from Umbelopsis ramanniana (Oleaginous fungus).